The primary structure comprises 216 residues: Phosphatidylserine decarboxylase proenzyme (216 aa).

Residue Ser185 is the Schiff-base intermediate with substrate; via pyruvic acid of the active site. Ser185 is modified (pyruvic acid (Ser); by autocatalysis).

Belongs to the phosphatidylserine decarboxylase family. PSD-A subfamily. In terms of assembly, heterodimer of a large membrane-associated beta subunit and a small pyruvoyl-containing alpha subunit. Pyruvate serves as cofactor. Is synthesized initially as an inactive proenzyme. Formation of the active enzyme involves a self-maturation process in which the active site pyruvoyl group is generated from an internal serine residue via an autocatalytic post-translational modification. Two non-identical subunits are generated from the proenzyme in this reaction, and the pyruvate is formed at the N-terminus of the alpha chain, which is derived from the carboxyl end of the proenzyme. The post-translation cleavage follows an unusual pathway, termed non-hydrolytic serinolysis, in which the side chain hydroxyl group of the serine supplies its oxygen atom to form the C-terminus of the beta chain, while the remainder of the serine residue undergoes an oxidative deamination to produce ammonia and the pyruvoyl prosthetic group on the alpha chain.

The protein resides in the cell membrane. It catalyses the reaction a 1,2-diacyl-sn-glycero-3-phospho-L-serine + H(+) = a 1,2-diacyl-sn-glycero-3-phosphoethanolamine + CO2. It participates in phospholipid metabolism; phosphatidylethanolamine biosynthesis; phosphatidylethanolamine from CDP-diacylglycerol: step 2/2. Catalyzes the formation of phosphatidylethanolamine (PtdEtn) from phosphatidylserine (PtdSer). This Nitrosomonas eutropha (strain DSM 101675 / C91 / Nm57) protein is Phosphatidylserine decarboxylase proenzyme.